The chain runs to 972 residues: Serine/threonine-protein kinase ATG1 (972 aa).

The region spanning 18–319 is the Protein kinase domain; that stretch reads YVVEKEIGRG…FTEFFSNGLV (302 aa). ATP is bound by residues 24–32 and Lys-48; that span reads IGRGSFAVV. Asp-166 serves as the catalytic Proton acceptor. Disordered regions lie at residues 359-394, 424-444, 467-506, 562-605, and 743-764; these read KRAS…QSDQ, YNNQ…SNGR, ALQS…HRTT, ASQA…SRRP, and DDEE…NSSG. The segment covering 424 to 436 has biased composition (basic and acidic residues); sequence YNNQEERSNEERQ. Residues 562–584 show a composition bias toward polar residues; that stretch reads ASQALQMARHSSTSVSAANTAKQ. Residues 585–605 are compositionally biased toward low complexity; it reads TLLRRNSRTLSSSGASTSRRP. The span at 750–759 shows a compositional bias: basic and acidic residues; it reads EHSPGAETYR.

This sequence belongs to the protein kinase superfamily. Ser/Thr protein kinase family. APG1/unc-51/ULK1 subfamily. Homodimer. Forms a ternary complex with ATG13 and ATG17.

The protein resides in the cytoplasm. It localises to the preautophagosomal structure membrane. The catalysed reaction is L-seryl-[protein] + ATP = O-phospho-L-seryl-[protein] + ADP + H(+). It carries out the reaction L-threonyl-[protein] + ATP = O-phospho-L-threonyl-[protein] + ADP + H(+). In terms of biological role, serine/threonine protein kinase involved in the cytoplasm to vacuole transport (Cvt) and found to be essential in autophagy, where it is required for the formation of autophagosomes. Involved in the clearance of protein aggregates which cannot be efficiently cleared by the proteasome. Required for selective autophagic degradation of the nucleus (nucleophagy) as well as for mitophagy which contributes to regulate mitochondrial quantity and quality by eliminating the mitochondria to a basal level to fulfill cellular energy requirements and preventing excess ROS production. Also involved in endoplasmic reticulum-specific autophagic process, in selective removal of ER-associated degradation (ERAD) substrates. Plays a key role in ATG9 and ATG23 cycling through the pre-autophagosomal structure and is necessary to promote ATG18 binding to ATG9 through phosphorylation of ATG9. Catalyzes phosphorylation of ATG4, decreasing the interaction between ATG4 and ATG8 and impairing deconjugation of PE-conjugated forms of ATG8. The protein is Serine/threonine-protein kinase ATG1 of Eremothecium gossypii (strain ATCC 10895 / CBS 109.51 / FGSC 9923 / NRRL Y-1056) (Yeast).